Consider the following 74-residue polypeptide: Protein F9 homolog (74 aa).

Topologically, residues 1-34 are virion surface; it reads GHAAANCALARVATALTRRVPASRHGLAEGGTPP. A helical transmembrane segment spans residues 35 to 55; the sequence is WTLLLAVAAVAVLGVVAISLL. Residues 56–73 are Intravirion-facing; sequence RRALRIRFRYSKSIQTLR.

This sequence belongs to the chordopoxvirinae L1 protein family.

It localises to the virion membrane. This chain is Protein F9 homolog, found in Capra hircus (Goat).